Consider the following 97-residue polypeptide: RxLR effector protein CRE10 (97 aa).

Residues 1 to 21 (MRLSYILVVVIAVTLQACVCA) form the signal peptide. The short motif at 48-66 (RLLRGVKKRTAEREVQEER) is the RxLR-dEER element.

It belongs to the RxLR effector family.

The protein resides in the secreted. It is found in the host cell. Effector that is involved in host plant infection. Contributes to virulence during the early infection stage, by inhibiting plant defense responses induced by both PAMP-triggered immunity (PTI) and effector-triggered immunity (ETI). The sequence is that of RxLR effector protein CRE10 from Phytophthora infestans (strain T30-4) (Potato late blight agent).